Consider the following 33-residue polypeptide: Cytochrome c oxidase subunit 5B liver, mitochondrial (33 aa).

The protein belongs to the cytochrome c oxidase subunit 5B family. In terms of assembly, component of the cytochrome c oxidase (complex IV, CIV), a multisubunit enzyme composed of 14 subunits. The complex is composed of a catalytic core of 3 subunits MT-CO1, MT-CO2 and MT-CO3, encoded in the mitochondrial DNA, and 11 supernumerary subunits COX4I, COX5A, COX5B, COX6A, COX6B, COX6C, COX7A, COX7B, COX7C, COX8 and NDUFA4, which are encoded in the nuclear genome. The complex exists as a monomer or a dimer and forms supercomplexes (SCs) in the inner mitochondrial membrane with NADH-ubiquinone oxidoreductase (complex I, CI) and ubiquinol-cytochrome c oxidoreductase (cytochrome b-c1 complex, complex III, CIII), resulting in different assemblies (supercomplex SCI(1)III(2)IV(1) and megacomplex MCI(2)III(2)IV(2)).

It localises to the mitochondrion inner membrane. The protein operates within energy metabolism; oxidative phosphorylation. In terms of biological role, component of the cytochrome c oxidase, the last enzyme in the mitochondrial electron transport chain which drives oxidative phosphorylation. The respiratory chain contains 3 multisubunit complexes succinate dehydrogenase (complex II, CII), ubiquinol-cytochrome c oxidoreductase (cytochrome b-c1 complex, complex III, CIII) and cytochrome c oxidase (complex IV, CIV), that cooperate to transfer electrons derived from NADH and succinate to molecular oxygen, creating an electrochemical gradient over the inner membrane that drives transmembrane transport and the ATP synthase. Cytochrome c oxidase is the component of the respiratory chain that catalyzes the reduction of oxygen to water. Electrons originating from reduced cytochrome c in the intermembrane space (IMS) are transferred via the dinuclear copper A center (CU(A)) of subunit 2 and heme A of subunit 1 to the active site in subunit 1, a binuclear center (BNC) formed by heme A3 and copper B (CU(B)). The BNC reduces molecular oxygen to 2 water molecules using 4 electrons from cytochrome c in the IMS and 4 protons from the mitochondrial matrix. The polypeptide is Cytochrome c oxidase subunit 5B liver, mitochondrial (Oncorhynchus mykiss (Rainbow trout)).